Reading from the N-terminus, the 491-residue chain is E3 ubiquitin-protein ligase Hakai (491 aa).

2 disordered regions span residues 1-20 (MDHT…LGGL) and 33-61 (KQAS…GDEE). Residues 109 to 149 (CDKCGLPIKVYGRMIPCKHVFCYDCAILHEKKGDKMCPGCS) form an RING-type zinc finger. The segment at 148-206 (CSDPVQRIEQCTRGSLFMCSIVQGCKRTYLSQRDLQAHINHRHMRAGKPVTRASLENVH) is HYB domain. The C2H2-type zinc-finger motif lies at 164-190 (FMCSIVQGCKRTYLSQRDLQAHINHRH). Phosphoserine occurs at positions 201, 285, and 290. Positions 255–491 (QPHEDIRAPP…DQTRYRPYYQ (237 aa)) are disordered. 3 stretches are compositionally biased toward pro residues: residues 342–359 (APPP…PHPP), 372–389 (APPP…PPPG), and 399–423 (MNHP…PPHH). Positions 427–442 (NSLPQFTEDQGTLSPP) are enriched in polar residues. Positions 457 to 478 (PRGPPPPPRMQGPPSQTPLPGP) are enriched in pro residues.

Belongs to the Hakai family. In terms of assembly, homodimer. Interacts with tyrosine-phosphorylated SRC substrates. Component of the WMM complex, a N6-methyltransferase complex composed of a catalytic subcomplex, named MAC, and of an associated subcomplex, named MACOM. The MAC subcomplex is composed of METTL3 and METTL14. The MACOM subcomplex is composed of WTAP, ZC3H13, CBLL1/HAKAI, VIRMA, and, in some cases of RBM15 (RBM15 or RBM15B). Also a component of a MACOM-like complex, named WTAP complex, composed of WTAP, ZC3H13, CBLL1, VIRMA, RBM15, BCLAF1 and THRAP3. Post-translationally, phosphorylated on tyrosine residues. As to expression, detected in heart, brain, spleen, lung, liver, skeletal muscle, kidney and testis.

It localises to the nucleus speckle. The protein localises to the nucleus. Its subcellular location is the nucleoplasm. The protein resides in the cytoplasm. It carries out the reaction S-ubiquitinyl-[E2 ubiquitin-conjugating enzyme]-L-cysteine + [acceptor protein]-L-lysine = [E2 ubiquitin-conjugating enzyme]-L-cysteine + N(6)-ubiquitinyl-[acceptor protein]-L-lysine.. The protein operates within protein modification; protein ubiquitination. In terms of biological role, E3 ubiquitin-protein ligase that mediates ubiquitination of several tyrosine-phosphorylated Src substrates, including CDH1, CTTN and DOK1. Targets CDH1 for endocytosis and degradation. Associated component of the WMM complex, a complex that mediates N6-methyladenosine (m6A) methylation of RNAs, a modification that plays a role in the efficiency of mRNA splicing and RNA processing. Its function in the WMM complex is unknown. The protein is E3 ubiquitin-protein ligase Hakai of Mus musculus (Mouse).